Here is a 131-residue protein sequence, read N- to C-terminus: C-type natriuretic peptide 1 (131 aa).

An N-terminal signal peptide occupies residues 1-22; sequence MLCPVLLCATLLLLTPFEVTEA. A propeptide spanning residues 23–109 is cleaved from the precursor; it reads RALHPSADAV…KRAEPDRSRR (87 aa). Cysteines 115 and 131 form a disulfide.

Belongs to the natriuretic peptide family. As to expression, brain and spinal cord.

The protein resides in the secreted. Exhibits natriuretic and vasodepressant activity. Has cGMP-stimulating activity. May help to regulate body fluid homeostasis in a variety of aquatic environments. In Oryzias latipes (Japanese rice fish), this protein is C-type natriuretic peptide 1.